We begin with the raw amino-acid sequence, 737 residues long: MDFASVLGKSEAHQRTIIHLDMDYFYAQVEEIRDPTLRSKALGIQQKNIVVTCNYVARAKGVTKLMLIAEAQRICPDLVLVNGEDLAPYRQMSQRIFDLLLNYTPLVEKLGFDENFMDVTALVELRQAHVAEALLRPPVGHTYPADGTPLSNCDCGCAQRLAIGTRIAQEIREELKLRLGITCCAGIAYNKLLAKLVGSSHEPNQQTVLVSTYAEQFMRELGDLKRVTGIGQKTQCLLLEAGMSSVEQLQQCDMDVMRKKFGFETATRLRDLAFGRDTSLVRPSGKPKTIGMEDACKPISVRTDVEERFRMLLKRLVEQVAEDGRVPIAIKVVLRKFDSQKKSSHRETKQANILPSLFKTSMCPGETGVSKVQLADGAQDKLLKIVMRLFERIVDMSKPFNITLLGLAFSKFQERKVGSSSIANFLIKKADLEVQSITSLTNTSLTSPTAESPTSDECAFRSSPTTFKPSDQFYRRRATTASPVPMLLDNGSESAATNSDFSDFSETEVEPSPKKSRIGRLLVSKRSRLAADVGDSAAEVASPSKLRVCDLRLNSRDSEKDFPMSTTPSTSTSAPAPRFRTVQPPNTLLQRIDGSLRFVTTRTASRLSSNASSTASSPLPSPMDDSIAMSAPSTTTLPFPSPTTTAVVTSSSSTATCDALTNIVCPAGVDAEVFKELPVELQTELIASWRSSLVAAVEQTNGTGAATSAAIASGAPATATTASGQKNTLYRYFLRNK.

Residues 17-231 enclose the UmuC domain; that stretch reads IIHLDMDYFY…GDLKRVTGIG (215 aa). Asp21 is a Mg(2+) binding site. A 2'-deoxyribonucleoside 5'-triphosphate-binding residues include Tyr26 and Arg58. Residue Asp113 participates in Mg(2+) binding. Residue Glu114 is part of the active site. DNA-binding stretches follow at residues 212–277 and 288–413; these read TYAE…FGRD and KTIG…SKFQ. 4 disordered regions span residues 443 to 464, 482 to 515, 557 to 581, and 607 to 643; these read TSLTSPTAESPTSDECAFRSSP, SPVPMLLDNGSESAATNSDFSDFSETEVEPSPKK, DSEKDFPMSTTPSTSTSAPAPRFRT, and LSSNASSTASSPLPSPMDDSIAMSAPSTTTLPFPSPT. The span at 491–502 shows a compositional bias: polar residues; it reads GSESAATNSDFS. Low complexity-rich tracts occupy residues 563 to 577, 607 to 618, and 632 to 643; these read PMSTTPSTSTSAPAP, LSSNASSTASSP, and PSTTTLPFPSPT. Residues 669–686 carry the Ubiquitin-binding (UBM) motif; it reads VDAEVFKELPVELQTELI.

The protein belongs to the DNA polymerase type-Y family. Mg(2+) serves as cofactor. The cofactor is Mn(2+).

It localises to the nucleus. The enzyme catalyses DNA(n) + a 2'-deoxyribonucleoside 5'-triphosphate = DNA(n+1) + diphosphate. Its function is as follows. Error-prone DNA polymerase specifically involved in DNA repair. Plays an important role in translesion synthesis, where the normal high-fidelity DNA polymerases cannot proceed and DNA synthesis stalls. Favors Hoogsteen base-pairing in the active site. Inserts the correct base with higher fidelity opposite an adenosine template. Exhibits low fidelity and efficiency opposite a thymidine template, where it will preferentially insert guanosine. Forms a Schiff base with 5'-deoxyribose phosphate at abasic sites, but may not have lyase activity. The polypeptide is DNA polymerase iota (Drosophila melanogaster (Fruit fly)).